Reading from the N-terminus, the 243-residue chain is Anti-H(O) lectin 1 (243 aa).

N-linked (GlcNAc...) asparagine; partial glycosylation is present at asparagine 10. Asparagine 116 carries N-linked (GlcNAc...) asparagine glycosylation. Mn(2+) contacts are provided by glutamate 126 and aspartate 128. Residues aspartate 128, asparagine 135, and aspartate 138 each coordinate Ca(2+). Mn(2+) is bound by residues aspartate 138 and histidine 143.

It belongs to the leguminous lectin family.

In terms of biological role, L-fucose specific lectin. The polypeptide is Anti-H(O) lectin 1 (Ulex europaeus (Furze)).